Reading from the N-terminus, the 570-residue chain is Adenine deaminase 2 (570 aa).

The protein belongs to the metallo-dependent hydrolases superfamily. Adenine deaminase family. The cofactor is Mn(2+).

It carries out the reaction adenine + H2O + H(+) = hypoxanthine + NH4(+). In Carboxydothermus hydrogenoformans (strain ATCC BAA-161 / DSM 6008 / Z-2901), this protein is Adenine deaminase 2.